A 37-amino-acid chain; its full sequence is Large ribosomal subunit protein bL36 (37 aa).

Belongs to the bacterial ribosomal protein bL36 family.

This chain is Large ribosomal subunit protein bL36, found in Sulfurimonas denitrificans (strain ATCC 33889 / DSM 1251) (Thiomicrospira denitrificans (strain ATCC 33889 / DSM 1251)).